Here is a 484-residue protein sequence, read N- to C-terminus: Glycogen synthase (484 aa).

K18 is a binding site for ADP-alpha-D-glucose.

The protein belongs to the glycosyltransferase 1 family. Bacterial/plant glycogen synthase subfamily.

The enzyme catalyses [(1-&gt;4)-alpha-D-glucosyl](n) + ADP-alpha-D-glucose = [(1-&gt;4)-alpha-D-glucosyl](n+1) + ADP + H(+). It functions in the pathway glycan biosynthesis; glycogen biosynthesis. In terms of biological role, synthesizes alpha-1,4-glucan chains using ADP-glucose. This chain is Glycogen synthase, found in Vibrio cholerae serotype O1 (strain ATCC 39541 / Classical Ogawa 395 / O395).